A 350-amino-acid polypeptide reads, in one-letter code: Putative deoxyribonuclease-2 (350 aa).

Belongs to the DNase II family.

The sequence is that of Putative deoxyribonuclease-2 from Burkholderia thailandensis (strain ATCC 700388 / DSM 13276 / CCUG 48851 / CIP 106301 / E264).